The following is a 168-amino-acid chain: uncharacterized protein (168 aa).

The 62-residue stretch at 19–80 folds into the HTH asnC-type domain; the sequence is LDKLDRHILN…VVSPKAVGRT (62 aa). Residues 38 to 57 constitute a DNA-binding region (H-T-H motif); sequence LKELSEKVNSSVATCQRRVQ.

This is an uncharacterized protein from Haemophilus influenzae (strain ATCC 51907 / DSM 11121 / KW20 / Rd).